A 95-amino-acid polypeptide reads, in one-letter code: TBK1 inhibitor DP96R (95 aa).

The protein belongs to the asfivirus DP96R family.

Inhibits cGAS-STING-mediated type I IFN expression and NF-kB activation by inhibiting TBK1 and IKBKB/IKKB. Inhibits host TBK1 phosphorylation. The polypeptide is TBK1 inhibitor DP96R (Ornithodoros (relapsing fever ticks)).